The chain runs to 902 residues: Protein translocase subunit SecA (902 aa).

ATP contacts are provided by residues Gln-87, 105–109 (GEGKT), and Asp-512. Disordered regions lie at residues 565-584 (RRID…PGSS) and 840-902 (VEEQ…GKLK). 2 stretches are compositionally biased toward basic and acidic residues: residues 840–859 (VEEQ…HEDA) and 873–882 (QVREGAKVGR). Zn(2+)-binding residues include Cys-886, Cys-888, Cys-897, and His-898. Positions 892 to 902 (KKYKQCHGKLK) are enriched in basic residues.

The protein belongs to the SecA family. In terms of assembly, monomer and homodimer. Part of the essential Sec protein translocation apparatus which comprises SecA, SecYEG and auxiliary proteins SecDF-YajC and YidC. It depends on Zn(2+) as a cofactor.

The protein localises to the cell inner membrane. It localises to the cytoplasm. The catalysed reaction is ATP + H2O + cellular proteinSide 1 = ADP + phosphate + cellular proteinSide 2.. Functionally, part of the Sec protein translocase complex. Interacts with the SecYEG preprotein conducting channel. Has a central role in coupling the hydrolysis of ATP to the transfer of proteins into and across the cell membrane, serving both as a receptor for the preprotein-SecB complex and as an ATP-driven molecular motor driving the stepwise translocation of polypeptide chains across the membrane. This is Protein translocase subunit SecA from Alteromonas mediterranea (strain DSM 17117 / CIP 110805 / LMG 28347 / Deep ecotype).